Consider the following 147-residue polypeptide: Hemoglobin subunit delta (147 aa).

The Globin domain maps to 3 to 147; it reads HLTPDEKNAV…VATALAHKYH (145 aa). Residue Ser-51 is modified to Phosphoserine. Heme b contacts are provided by His-64 and His-93.

It belongs to the globin family. Heterotetramer of two delta chains and two alpha chains. Red blood cells.

The polypeptide is Hemoglobin subunit delta (HBD) (Otolemur crassicaudatus (Brown greater galago)).